A 920-amino-acid chain; its full sequence is Protein O-mannosyl-transferase TMTC3 (920 aa).

Residues 1-14 are Cytoplasmic-facing; it reads MLEGKMADINFKEV. Residues 15-35 traverse the membrane as a helical segment; that stretch reads TLIVSVVAACYWNSLFCGFVF. The Extracellular portion of the chain corresponds to 36–94; that stretch reads DDVSAILDNKDLHPSTPLKTLFQNDFWGTPMSEERSHKSYRPLTVLTFRLNYLLSELKP. The chain crosses the membrane as a helical span at residues 95–115; the sequence is MSYHLLNTVFHAVVSVIFLKV. Residues 116-125 are Cytoplasmic-facing; the sequence is CRLFLDKRSS. A run of 2 helical transmembrane segments spans residues 126 to 144 and 145 to 163; these read MIAALLFAVHPIHTEAVTG and VVGRAELLSSVFFLAAFLS. Topologically, residues 164–171 are cytoplasmic; it reads YTKSKGPD. The helical transmembrane segment at 172–192 threads the bilayer; sequence NSIVWTPIVLTVFLVAVATLC. The Extracellular segment spans residues 193–198; that stretch reads KEQGIT. A helical membrane pass occupies residues 199 to 219; the sequence is VVGICCVYEVFVAQGYTLPML. Residues 220-236 lie on the Cytoplasmic side of the membrane; sequence CTVAGQFLRGKGSIPLS. Residues 237-257 traverse the membrane as a helical segment; that stretch reads MLQTLVKLIVLMLSTLLLVVV. Residues 258–325 lie on the Extracellular side of the membrane; sequence RVQVIQSQLP…LIESFLDVRN (68 aa). Residues 326–346 form a helical membrane-spanning segment; the sequence is LATFAFFCFLGALGIFSLRYP. Over 347–358 the chain is Cytoplasmic; sequence GDSSKTVLMALC. The chain crosses the membrane as a helical span at residues 359–379; the sequence is LMALPFIPASNLFFPVGFVVA. Residues 380 to 381 lie on the Extracellular side of the membrane; it reads ER. The helical transmembrane segment at 382–402 threads the bilayer; sequence VLYVPSMGFCILVAHGWQKIS. The Cytoplasmic segment spans residues 403–409; it reads NKSVLKK. The helical transmembrane segment at 410-428 threads the bilayer; it reads LSWVCLSMVILTHALKTLH. At 429–920 the chain is on the extracellular side; the sequence is RNWDWESEYT…EEIERILNGE (492 aa). 9 TPR repeats span residues 451–484, 485–518, 534–567, 568–601, 602–635, 673–706, 707–740, 742–775, and 776–809; these read AKLWNNVGHALENEKNFEKALKYFLQATHVQPDD, IGAHMNVGRTYKNLNRSREAEASYMLAKSLMPQI, NVYINLANLIRANESRLEEADQLYRQAISMRPDF, KQAYISRGELLLKMNKPLKAKEAYLKALELDRNN, ADLWYNLAIVYIELKEPNEALKNFNRALELNPKH, ANGYFNLGMLAMDDKKDSEAESWMKKAIKLQPDF, RSALFNLALLYSQTAKELKALPILEELLKYYPDH, KGLILKGDILMNQKKDIPGAKKCFEKILEMDPSN, and VQGKHNLCVVYFEEKELLKAERCLVETLALAPHE. An N-linked (GlcNAc...) asparagine glycan is attached at N499. The residue at position 508 (Y508) is a Phosphotyrosine. N-linked (GlcNAc...) asparagine glycosylation occurs at N546. Residues 829 to 897 form a disordered region; that stretch reads VEQPLAPADK…APHKTTKDIK (69 aa). The span at 840–858 shows a compositional bias: basic and acidic residues; that stretch reads PGTEEREEIPSEDVKEISS. Residues 867-880 show a composition bias toward low complexity; it reads KTNNNRNSKSNKQS. Residues 887 to 897 show a composition bias toward basic and acidic residues; the sequence is DAPHKTTKDIK.

Belongs to the TMTC family.

The protein localises to the membrane. It is found in the endoplasmic reticulum. It catalyses the reaction a di-trans,poly-cis-dolichyl beta-D-mannosyl phosphate + L-seryl-[protein] = 3-O-(alpha-D-mannosyl)-L-seryl-[protein] + a di-trans,poly-cis-dolichyl phosphate + H(+). It carries out the reaction a di-trans,poly-cis-dolichyl beta-D-mannosyl phosphate + L-threonyl-[protein] = 3-O-(alpha-D-mannosyl)-L-threonyl-[protein] + a di-trans,poly-cis-dolichyl phosphate + H(+). The protein operates within protein modification; protein glycosylation. Functionally, transfers mannosyl residues to the hydroxyl group of serine or threonine residues. The 4 members of the TMTC family are O-mannosyl-transferases dedicated primarily to the cadherin superfamily, each member seems to have a distinct role in decorating the cadherin domains with O-linked mannose glycans at specific regions. Also acts as O-mannosyl-transferase on other proteins such as PDIA3. Involved in the positive regulation of proteasomal protein degradation in the endoplasmic reticulum (ER), and the control of ER stress response. The chain is Protein O-mannosyl-transferase TMTC3 from Mus musculus (Mouse).